Reading from the N-terminus, the 193-residue chain is ATP-dependent Clp protease proteolytic subunit (193 aa).

The Nucleophile role is filled by serine 98. The active site involves histidine 123.

This sequence belongs to the peptidase S14 family. In terms of assembly, fourteen ClpP subunits assemble into 2 heptameric rings which stack back to back to give a disk-like structure with a central cavity, resembling the structure of eukaryotic proteasomes.

The protein resides in the cytoplasm. It catalyses the reaction Hydrolysis of proteins to small peptides in the presence of ATP and magnesium. alpha-casein is the usual test substrate. In the absence of ATP, only oligopeptides shorter than five residues are hydrolyzed (such as succinyl-Leu-Tyr-|-NHMec, and Leu-Tyr-Leu-|-Tyr-Trp, in which cleavage of the -Tyr-|-Leu- and -Tyr-|-Trp bonds also occurs).. Cleaves peptides in various proteins in a process that requires ATP hydrolysis. Has a chymotrypsin-like activity. Plays a major role in the degradation of misfolded proteins. In Haemophilus influenzae (strain PittEE), this protein is ATP-dependent Clp protease proteolytic subunit.